We begin with the raw amino-acid sequence, 444 residues long: Sperm-associated antigen 4 protein (444 aa).

The interval 1–109 is disordered; that stretch reads MRRNPRPGSA…GGASEPSGSP (109 aa). The span at 19–36 shows a compositional bias: low complexity; that stretch reads NFYSENSNSSHSATSGDS. 2 helical membrane-spanning segments follow: residues 137–159 and 166–188; these read FLSL…LVCV and IRFL…WGLL. Residues 204–241 adopt a coiled-coil conformation; the sequence is LSQYHHRVHSQGQQLQQLQAELSKLHKEVTSVRAAHSE. The SUN domain maps to 267–428; that stretch reads GASIDLEKTS…YRVRAHGVRI (162 aa).

In terms of assembly, self-associates. Interacts with ODF1. May associate with microtubules. Interacts with SUN3 and SYNE1; suggesting the formation of a LINC complexs; a SUN domain-based heterotrimer of SPAG4 and SUN3 may associate with SYNE1. Interacts with SEPT12 and LMNB1; during spermatogenesis. As to expression, testis specific. Exclusively expressed in spermatids.

The protein localises to the membrane. It is found in the cytoplasm. The protein resides in the cytoskeleton. Its subcellular location is the flagellum axoneme. It localises to the nucleus envelope. The protein localises to the nucleus inner membrane. Its function is as follows. Involved in spermatogenesis. Required for sperm head formation but not required to establish and maintain general polarity of the sperm head. Required for anchoring and organization of the manchette. Required for targeting of SUN3 and probably SYNE1 through a probable SUN1:SYNE3 LINC complex to the nuclear envelope and involved in accurate posterior sperm head localization of the complex. May anchor SUN3 the nuclear envelope. Involved in maintenance of the nuclear envelope integrity. May assist the organization and assembly of outer dense fibers (ODFs), a specific structure of the sperm tail. In Rattus norvegicus (Rat), this protein is Sperm-associated antigen 4 protein (Spag4).